A 103-amino-acid polypeptide reads, in one-letter code: Non-histone chromosomal protein 6 (103 aa).

2 disordered regions span residues 1–30 (MPKA…KRGL) and 70–103 (KQRA…EESS). Residues 26 to 94 (PKRGLSAYMF…RYEDEKQAYN (69 aa)) constitute a DNA-binding region (HMG box). Residues 70–91 (KQRAPYEAKAAADKKRYEDEKQ) show a composition bias toward basic and acidic residues.

Belongs to the NHP6 family. As to quaternary structure, weakly associates with the stable heterodimer of ctc-1/pob3 and ctc-2/spt16 to form the FACT complex.

It localises to the nucleus. Its subcellular location is the chromosome. DNA-binding protein that induces severe bending of DNA. Required for DNA-binding by the FACT complex, a general chromatin factor that acts to reorganize nucleosomes. The FACT complex is involved in multiple processes that require DNA as a template such as mRNA elongation, DNA replication and DNA repair. Also augments the fidelity of transcription by RNA polymerase III independently of any role in the FACT complex. In Neurospora crassa (strain ATCC 24698 / 74-OR23-1A / CBS 708.71 / DSM 1257 / FGSC 987), this protein is Non-histone chromosomal protein 6 (nhp-1).